A 141-amino-acid chain; its full sequence is Large ribosomal subunit protein uL11 (141 aa).

This sequence belongs to the universal ribosomal protein uL11 family. Part of the ribosomal stalk of the 50S ribosomal subunit. Interacts with L10 and the large rRNA to form the base of the stalk. L10 forms an elongated spine to which L12 dimers bind in a sequential fashion forming a multimeric L10(L12)X complex. Post-translationally, one or more lysine residues are methylated.

Functionally, forms part of the ribosomal stalk which helps the ribosome interact with GTP-bound translation factors. This is Large ribosomal subunit protein uL11 from Synechococcus elongatus (strain ATCC 33912 / PCC 7942 / FACHB-805) (Anacystis nidulans R2).